Reading from the N-terminus, the 301-residue chain is Homoserine O-acetyltransferase (301 aa).

Cysteine 142 serves as the catalytic Acyl-thioester intermediate. 2 residues coordinate substrate: lysine 163 and serine 192. Histidine 235 (proton acceptor) is an active-site residue. Glutamate 237 is an active-site residue. A substrate-binding site is contributed by arginine 249.

It belongs to the MetA family.

It is found in the cytoplasm. It catalyses the reaction L-homoserine + acetyl-CoA = O-acetyl-L-homoserine + CoA. It functions in the pathway amino-acid biosynthesis; L-methionine biosynthesis via de novo pathway; O-acetyl-L-homoserine from L-homoserine: step 1/1. Its function is as follows. Transfers an acetyl group from acetyl-CoA to L-homoserine, forming acetyl-L-homoserine. The sequence is that of Homoserine O-acetyltransferase from Bacillus anthracis (strain A0248).